A 186-amino-acid polypeptide reads, in one-letter code: Adenylate kinase (186 aa).

10–15 (GVGKGT) contributes to the ATP binding site. The segment at 30–59 (STGDIFRYNIKNKTELGLEAMSYTDKGELV) is NMP. Residues T31, R36, 57–59 (ELV), 85–88 (GYPR), and Q92 each bind AMP. The tract at residues 126–136 (KRAAEQGRADD) is LID. ATP is bound at residue R127. 2 residues coordinate AMP: R133 and R144. G172 is a binding site for ATP.

The protein belongs to the adenylate kinase family. In terms of assembly, monomer.

Its subcellular location is the cytoplasm. It carries out the reaction AMP + ATP = 2 ADP. Its pathway is purine metabolism; AMP biosynthesis via salvage pathway; AMP from ADP: step 1/1. Its function is as follows. Catalyzes the reversible transfer of the terminal phosphate group between ATP and AMP. Plays an important role in cellular energy homeostasis and in adenine nucleotide metabolism. The protein is Adenylate kinase of Bifidobacterium longum (strain NCC 2705).